A 256-amino-acid chain; its full sequence is Thiazole synthase (256 aa).

Residue lysine 96 is the Schiff-base intermediate with DXP of the active site. 1-deoxy-D-xylulose 5-phosphate is bound by residues glycine 157, 183–184, and 205–206; these read AG and NT.

Belongs to the ThiG family. As to quaternary structure, homotetramer. Forms heterodimers with either ThiH or ThiS.

It localises to the cytoplasm. It carries out the reaction [ThiS sulfur-carrier protein]-C-terminal-Gly-aminoethanethioate + 2-iminoacetate + 1-deoxy-D-xylulose 5-phosphate = [ThiS sulfur-carrier protein]-C-terminal Gly-Gly + 2-[(2R,5Z)-2-carboxy-4-methylthiazol-5(2H)-ylidene]ethyl phosphate + 2 H2O + H(+). It participates in cofactor biosynthesis; thiamine diphosphate biosynthesis. In terms of biological role, catalyzes the rearrangement of 1-deoxy-D-xylulose 5-phosphate (DXP) to produce the thiazole phosphate moiety of thiamine. Sulfur is provided by the thiocarboxylate moiety of the carrier protein ThiS. In vitro, sulfur can be provided by H(2)S. This Bacillus mycoides (strain KBAB4) (Bacillus weihenstephanensis) protein is Thiazole synthase.